A 256-amino-acid chain; its full sequence is 5-oxoprolinase subunit A 1 (256 aa).

It belongs to the LamB/PxpA family. In terms of assembly, forms a complex composed of PxpA, PxpB and PxpC.

The catalysed reaction is 5-oxo-L-proline + ATP + 2 H2O = L-glutamate + ADP + phosphate + H(+). Catalyzes the cleavage of 5-oxoproline to form L-glutamate coupled to the hydrolysis of ATP to ADP and inorganic phosphate. The sequence is that of 5-oxoprolinase subunit A 1 from Pseudomonas syringae pv. tomato (strain ATCC BAA-871 / DC3000).